A 271-amino-acid chain; its full sequence is Pyridoxine kinase (271 aa).

Residue asparagine 141 coordinates ATP. Mg(2+) is bound at residue glutamate 144. Residues 178–182 (TGGGK), aspartate 190, isoleucine 206, glycine 215, and lysine 240 each bind ATP.

The protein belongs to the ThiD family. As to quaternary structure, homodimer.

The catalysed reaction is pyridoxal + ATP = pyridoxal 5'-phosphate + ADP + H(+). Phosphorylates B6 vitamers; functions in a salvage pathway. Uses pyridoxal, pyridoxine, and pyridoxamine as substrates. Can also use hydroxymethylpyrimidine (HMP) as substrate. In Bacillus subtilis (strain 168), this protein is Pyridoxine kinase (pdxK).